We begin with the raw amino-acid sequence, 247 residues long: VQ motif-containing protein 4 (247 aa).

The disordered stretch occupies residues 1–128 (MENSPRYREA…SSSSASGFRL (128 aa)). Residue Ser-16 is modified to Phosphoserine. Positions 21-37 (NSNNSCGMSSSSESNKP) are enriched in low complexity. 2 stretches are compositionally biased toward polar residues: residues 48–75 (RSES…QMLT) and 87–106 (LKPN…SSFS). Positions 67 to 76 (FKQVVQMLTG) match the VQ motif. Residues Ser-106, Ser-155, Ser-163, Ser-165, and Ser-175 each carry the phosphoserine modification. Thr-178 is subject to Phosphothreonine. The segment at 184–247 (PFDRSGSSNQ…VSGSSSASTS (64 aa)) is disordered. Ser-194 carries the post-translational modification Phosphoserine. The span at 200 to 210 (AEEKAMKERGF) shows a compositional bias: basic and acidic residues. Ser-215 is modified (phosphoserine). A phosphothreonine mark is found at Thr-219 and Thr-234. Residues Ser-235, Ser-239, and Ser-243 each carry the phosphoserine modification. Residues 236–247 (PRVSGSSSASTS) show a composition bias toward polar residues.

Interacts with MPK3 and MPK6. In terms of processing, phosphorylated on serine and threonine residues by MPK6 following treatment with the pathogen-associated molecular pattern (PAMP) flg22. MAP kinase-mediated phosphorylation after PAMP elicitation causes degradation of VQ4, allowing WRKY33 to promote transcription from defense genes.

It is found in the nucleus. In terms of biological role, acts as a negative regulator of WRKY33 transcription factor activity in the promotion of defense gene expression. Acts as a negative regulator of pathogen-associated molecular pattern (PAMP)-induced responses to modulate resistance to pathogens. The sequence is that of VQ motif-containing protein 4 from Arabidopsis thaliana (Mouse-ear cress).